We begin with the raw amino-acid sequence, 135 residues long: Cilia- and flagella-associated protein 144 (135 aa).

A disordered region spans residues 76 to 100; sequence QGPKKKYSETQTEAQEIGWDPNPLI.

Belongs to the CFAP144 family. As to quaternary structure, microtubule inner protein component of sperm flagellar doublet microtubules. In terms of tissue distribution, predominantly expressed in tissues containing motile cilia.

The protein resides in the cytoplasm. It is found in the cytoskeleton. It localises to the cilium axoneme. The protein localises to the flagellum axoneme. This Mus musculus (Mouse) protein is Cilia- and flagella-associated protein 144.